Reading from the N-terminus, the 200-residue chain is Recombination protein RecR (200 aa).

The C4-type zinc finger occupies 59–74 (CSVCGSLDTSDPCAIC). Positions 82-177 (RLLCVVEEVG…SVTMLARGVP (96 aa)) constitute a Toprim domain.

The protein belongs to the RecR family.

In terms of biological role, may play a role in DNA repair. It seems to be involved in an RecBC-independent recombinational process of DNA repair. It may act with RecF and RecO. The protein is Recombination protein RecR of Caulobacter sp. (strain K31).